Here is a 934-residue protein sequence, read N- to C-terminus: Bifunctional uridylyltransferase/uridylyl-removing enzyme (934 aa).

The segment at 1–379 (MSAHDLKLEE…TFSRRKRKLS (379 aa)) is uridylyltransferase. The interval 380-736 (DDGAFISENH…AKPHAFEAVT (357 aa)) is uridylyl-removing. One can recognise an HD domain in the interval 496-613 (VDEHLLRCIA…IDFADTVQTM (118 aa)). ACT domains are found at residues 737–818 (EITV…DMLA) and 848–931 (VIEV…RSPQ).

This sequence belongs to the GlnD family. The cofactor is Mg(2+).

The enzyme catalyses [protein-PII]-L-tyrosine + UTP = [protein-PII]-uridylyl-L-tyrosine + diphosphate. The catalysed reaction is [protein-PII]-uridylyl-L-tyrosine + H2O = [protein-PII]-L-tyrosine + UMP + H(+). Uridylyltransferase (UTase) activity is inhibited by glutamine, while glutamine activates uridylyl-removing (UR) activity. Functionally, modifies, by uridylylation and deuridylylation, the PII regulatory proteins (GlnB and homologs), in response to the nitrogen status of the cell that GlnD senses through the glutamine level. Under low glutamine levels, catalyzes the conversion of the PII proteins and UTP to PII-UMP and PPi, while under higher glutamine levels, GlnD hydrolyzes PII-UMP to PII and UMP (deuridylylation). Thus, controls uridylylation state and activity of the PII proteins, and plays an important role in the regulation of nitrogen assimilation and metabolism. The sequence is that of Bifunctional uridylyltransferase/uridylyl-removing enzyme from Brucella suis biovar 1 (strain 1330).